A 666-amino-acid polypeptide reads, in one-letter code: MSYSDSDSSSHGGEYKNFRQITRERLLYEMLRSAKTGSSKSTWKVLIMDKLTVKIMSYACKMADITQEGVSLVEDIFRRRQPLPSMDAIYFIQPTKENVIMFLSDMSGKSPLYKKAFVFFSSPVSKELVGHIKKDSSVLPRIGALREMNLEFFAIDSQGFITDHERALEDLFGDEETSRKGDACLNVMASRIATVFASLREFPAVRYRAAKSLDASTMTTLRDLIPTKLAAGIWNCLAKHKQSIENFPQTETCELLILDRSIDQIAPVIHEWTYDAMCHDLLNMEGNKYVHVIPSKSGGQPEKKDVLLEEHDPIWLELRHAHIADASERLHDKMTNFLSKNKAAQLQGKRDGAELSTRDLQKMVQALPQYSEQIDKLSLHVEIARKLNDLIREQGLRELGQLEQDLVFGDAGMKDVIKYLSTQEEASREGKLRLLMILATIYPEKFEGEKGQNLMKLAKLSSDDMTAVNNMSLLGSAVDAKKNTPGGFTLKFDLHKKKRAVRKERQEEAAWQLSRFYPMIEELIEKLSKGELPKEDFPCMNDPSPSFHGSTSLSSAASSSQGQAAQSMRSRRTPTWAKPRGSDDGYSSDSVLRHASSDFRKMGQRIFVFIVGGATRSELKVCHKLSTKLKREVILGSTSLDDPPQFITKLKLLTANDDLSLDDLQI.

A coiled-coil region spans residues 340 to 377 (KNKAAQLQGKRDGAELSTRDLQKMVQALPQYSEQIDKL). A disordered region spans residues 534–589 (KEDFPCMNDPSPSFHGSTSLSSAASSSQGQAAQSMRSRRTPTWAKPRGSDDGYSSD). Low complexity predominate over residues 550-568 (STSLSSAASSSQGQAAQSM).

Belongs to the STXBP/unc-18/SEC1 family. As to quaternary structure, binds the syntaxin KNOLLE. Interacts with SEC6. As to expression, expressed throughout the plant, both in mitotically active and quiescent cells. Enriched in dividing tissues.

It localises to the cytoplasm. It is found in the membrane. Its subcellular location is the cytoskeleton. The protein resides in the phragmoplast. Functionally, regulator of vesicle trafficking involved in cytokinesis and root hair development, but not required for cell elongation. This Arabidopsis thaliana (Mouse-ear cress) protein is SNARE-interacting protein KEULE (KEU).